A 359-amino-acid chain; its full sequence is Putative nucleotidyltransferase MAB21L1 (359 aa).

Residues 23–24 (RK) and 63–66 (YEGL) each bind a ribonucleoside 5'-triphosphate. Mg(2+) is bound by residues E73 and E75. A ribonucleoside 5'-triphosphate-binding positions include K248 and 252-255 (SLLK).

It belongs to the mab-21 family. In terms of assembly, monomer. Homodecamer; composed of 2 back to back homopentamers. The protein may exist as monomer in solution and oiligomerizes upon ligand binding.

The protein resides in the nucleus. In terms of biological role, putative nucleotidyltransferase required for several aspects of embryonic development including normal development of the eye. It is unclear whether it displays nucleotidyltransferase activity in vivo. Binds single-stranded RNA (ssRNA). The polypeptide is Putative nucleotidyltransferase MAB21L1 (mab21l1) (Xenopus tropicalis (Western clawed frog)).